A 513-amino-acid chain; its full sequence is Na(+)/H(+) antiporter NhaB (513 aa).

12 helical membrane-spanning segments follow: residues 23–43 (LALI…PFVA), 52–72 (IFTL…LLAI), 97–117 (LLLM…LFIF), 120–140 (LLLS…AAAF), 144–164 (FLDA…FYGI), 202–222 (LMMH…VGEP), 238–258 (FFLR…LTCL), 303–323 (AIIG…VGLI), 348–368 (TESL…AVII), 391–411 (LFYI…VGTI), 447–467 (ATPN…APLI), and 475–495 (VWMA…CVEF).

It belongs to the NhaB Na(+)/H(+) (TC 2.A.34) antiporter family.

It localises to the cell inner membrane. It carries out the reaction 2 Na(+)(in) + 3 H(+)(out) = 2 Na(+)(out) + 3 H(+)(in). Functionally, na(+)/H(+) antiporter that extrudes sodium in exchange for external protons. This Escherichia coli O6:K15:H31 (strain 536 / UPEC) protein is Na(+)/H(+) antiporter NhaB.